The chain runs to 266 residues: Undecaprenyl-diphosphatase (266 aa).

A run of 8 helical transmembrane segments spans residues 1-21 (METFQVILLALIQGLTEFLPI), 39-59 (QGLSFDVAVNTGSLFAVVIYF), 87-107 (WWIILATIPAVIVGFTAKDFI), 111-131 (FRNTLVIAITTIVFGLLLWAA), 144-164 (MGWKKALLIGLAQAMALIPGT), 183-203 (AAARFSFLMSVPVSFGAALLV), 218-238 (ALGLGIVVSFVAAYLCIHFFL), and 244-264 (IGMTPFVLYRLALGAILLGLL).

It belongs to the UppP family.

Its subcellular location is the cell inner membrane. It carries out the reaction di-trans,octa-cis-undecaprenyl diphosphate + H2O = di-trans,octa-cis-undecaprenyl phosphate + phosphate + H(+). Its function is as follows. Catalyzes the dephosphorylation of undecaprenyl diphosphate (UPP). Confers resistance to bacitracin. In Shewanella frigidimarina (strain NCIMB 400), this protein is Undecaprenyl-diphosphatase.